Reading from the N-terminus, the 515-residue chain is Maturase K (515 aa).

This sequence belongs to the intron maturase 2 family. MatK subfamily.

It localises to the plastid. The protein localises to the chloroplast. Functionally, usually encoded in the trnK tRNA gene intron. Probably assists in splicing its own and other chloroplast group II introns. In Pinus coulteri (Coulter pine), this protein is Maturase K.